A 531-amino-acid polypeptide reads, in one-letter code: Anthranilate synthase component 1 (531 aa).

Residues S56 and 284-286 contribute to the L-tryptophan site; that span reads PYM. Chorismate is bound at residue 324 to 325; it reads GS. E351 provides a ligand contact to Mg(2+). Residues Y439, R459, 473-475, and G475 each bind chorismate; that span reads GGG. Residue E488 participates in Mg(2+) binding. A disordered region spans residues 506 to 531; it reads LHNITPDSVSAPDSVSSPDSVTEANS. The segment covering 511–531 has biased composition (low complexity); sequence PDSVSAPDSVSSPDSVTEANS.

It belongs to the anthranilate synthase component I family. As to quaternary structure, heterotetramer consisting of two non-identical subunits: a beta subunit (TrpG) and a large alpha subunit (TrpE). Requires Mg(2+) as cofactor.

It carries out the reaction chorismate + L-glutamine = anthranilate + pyruvate + L-glutamate + H(+). Its pathway is amino-acid biosynthesis; L-tryptophan biosynthesis; L-tryptophan from chorismate: step 1/5. With respect to regulation, feedback inhibited by tryptophan. Part of a heterotetrameric complex that catalyzes the two-step biosynthesis of anthranilate, an intermediate in the biosynthesis of L-tryptophan. In the first step, the glutamine-binding beta subunit (TrpG) of anthranilate synthase (AS) provides the glutamine amidotransferase activity which generates ammonia as a substrate that, along with chorismate, is used in the second step, catalyzed by the large alpha subunit of AS (TrpE) to produce anthranilate. In the absence of TrpG, TrpE can synthesize anthranilate directly from chorismate and high concentrations of ammonia. This chain is Anthranilate synthase component 1 (trpE), found in Arthrobacter globiformis.